The following is a 414-amino-acid chain: Autophagy-related protein 18 (414 aa).

4 WD repeats span residues 1–36 (MAMN…KSYE), 69–114 (KRQS…LLYT), 185–225 (AHRS…KLYQ), and 230–269 (SIPS…SSRE). The short motif at 226–230 (FRRGS) is the L/FRRG motif element. A disordered region spans residues 261 to 314 (LSHQTSSREGSPSSALSRERAASQSSLGTSPDPDDPTDDMESSEIASRKHNGTL). Polar residues predominate over residues 262–289 (SHQTSSREGSPSSALSRERAASQSSLGT). Positions 292–302 (DPDDPTDDMES) are enriched in acidic residues. 2 WD repeats span residues 309–355 (KHNG…AWIK) and 367–407 (GNAG…GGEG).

It belongs to the WD repeat PROPPIN family. Component of the PI(3,5)P2 regulatory complex.

The protein localises to the preautophagosomal structure membrane. It is found in the vacuole membrane. The protein resides in the endosome membrane. Its function is as follows. The PI(3,5)P2 regulatory complex regulates both the synthesis and turnover of phosphatidylinositol 3,5-bisphosphate (PtdIns(3,5)P2). Necessary for proper vacuole morphology. Plays an important role in osmotically-induced vacuole fragmentation. Required for cytoplasm to vacuole transport (Cvt) vesicle formation, pexophagy and starvation-induced autophagy. Involved in correct atg9 trafficking to the pre-autophagosomal structure. Might also be involved in premeiotic DNA replication. The protein is Autophagy-related protein 18 (atg18) of Aspergillus terreus (strain NIH 2624 / FGSC A1156).